A 547-amino-acid chain; its full sequence is 4-coumarate-CoA ligase 1 (547 aa).

ATP contacts are provided by residues 190–194 (SSGTT), histidine 238, 310–312 (AAP), 332–333 (QG), threonine 337, aspartate 421, arginine 436, and lysine 527. The interval 263 to 332 (EIVRLMELVE…EKLPNAKLGQ (70 aa)) is SBD1. Residues 333–400 (GYGMTEAGPV…IRGNQIMKGY (68 aa)) form an SBD2 region.

Belongs to the ATP-dependent AMP-binding enzyme family. Mostly expressed in stems, and, to a lower extent, in bulbs.

It carries out the reaction (E)-4-coumarate + ATP + CoA = (E)-4-coumaroyl-CoA + AMP + diphosphate. It participates in phytoalexin biosynthesis; 3,4',5-trihydroxystilbene biosynthesis; 3,4',5-trihydroxystilbene from trans-4-coumarate: step 1/2. Produces CoA thioesters of a variety of hydroxy- and methoxy-substituted cinnamic acids, which are used to synthesize several phenylpropanoid-derived compounds, including anthocyanins, flavonoids, isoflavonoids, coumarins, lignin, suberin and wall-bound phenolics. This Narcissus pseudonarcissus (Daffodil) protein is 4-coumarate-CoA ligase 1.